Here is a 473-residue protein sequence, read N- to C-terminus: Ribulose bisphosphate carboxylase large chain (473 aa).

Residues N116 and T166 each coordinate substrate. K168 acts as the Proton acceptor in catalysis. Substrate is bound at residue K170. K194, D196, and E197 together coordinate Mg(2+). N6-carboxylysine is present on K194. H287 acts as the Proton acceptor in catalysis. Substrate-binding residues include R288, H320, and S372.

Belongs to the RuBisCO large chain family. Type I subfamily. Heterohexadecamer of 8 large chains and 8 small chains. Mg(2+) is required as a cofactor.

It carries out the reaction 2 (2R)-3-phosphoglycerate + 2 H(+) = D-ribulose 1,5-bisphosphate + CO2 + H2O. It catalyses the reaction D-ribulose 1,5-bisphosphate + O2 = 2-phosphoglycolate + (2R)-3-phosphoglycerate + 2 H(+). Functionally, ruBisCO catalyzes two reactions: the carboxylation of D-ribulose 1,5-bisphosphate, the primary event in carbon dioxide fixation, as well as the oxidative fragmentation of the pentose substrate. Both reactions occur simultaneously and in competition at the same active site. The polypeptide is Ribulose bisphosphate carboxylase large chain (Methylococcus capsulatus (strain ATCC 33009 / NCIMB 11132 / Bath)).